We begin with the raw amino-acid sequence, 236 residues long: Small ribosomal subunit protein uS3 (236 aa).

One can recognise a KH type-2 domain in the interval 39-107; sequence VRHFLMQKLS…PTQLNIAEVR (69 aa).

The protein belongs to the universal ribosomal protein uS3 family. Part of the 30S ribosomal subunit. Forms a tight complex with proteins S10 and S14.

In terms of biological role, binds the lower part of the 30S subunit head. Binds mRNA in the 70S ribosome, positioning it for translation. This chain is Small ribosomal subunit protein uS3, found in Blochmanniella pennsylvanica (strain BPEN).